The chain runs to 361 residues: N-methyltransferase benX (361 aa).

Belongs to the methyltransferase superfamily.

Its pathway is secondary metabolite biosynthesis. Functionally, N-methyltransferase; part of the gene cluster that mediates the biosynthesis of benzomalvin A and D. The pathway begins with the loading of amino acid precursors onto the A domains of the non ribosomal peptide synthetases benY and benZ. BenY and the A1 domain of benZ are loaded with anthranilate (Anth), while the A2 domain of benZ is loaded with phenylalanine (Phe). N-methylation of Phe by the methyltransferase benX may happen before loading of Phe onto benZ, after loading of Phe, or after dipeptide formation. Condensation of Anth with the secondary amine of NmPhe or Phe is catalyzed by the C1 domain of benZ, forming a dipeptide intermediate. This is followed by in trans condensation of the Anth-NmPhe dipeptide with Anth bound to the T domain of benY by the C2 domain of benZ to form the linear tripeptide Anth-NmPhe-Anth. Cyclization and release of the tripeptide is then catalyzed by the C-terminal C domain of benY and the resulting 11-member macrocyclic intermediate is expected to spontaneously collapse to form the benzodiazepine core. Benzomalvin A is in conformational equilibrium with its atropisomer, benzomalvin D. This Aspergillus terreus protein is N-methyltransferase benX.